An 82-amino-acid polypeptide reads, in one-letter code: Proline, histidine and glycine-rich protein 1 (82 aa).

The segment at 20 to 82 is disordered; it reads HCGPPPGHGP…PGHPPPGPHH (63 aa).

This is Proline, histidine and glycine-rich protein 1 (PHGR1) from Homo sapiens (Human).